Here is a 180-residue protein sequence, read N- to C-terminus: MTVFEGNLQDTRDLKFAIVIARFNDLVVGKLLSACEDSLRRHGVAVGPDSHQVDYAWVPGSFEIPMVARQLALSGRYDAIVCLGAVIRGQTSHYDHVASEVAKGIQALAFQTGVPVTFGVLTTDTMQQAIERAGIKSNLGWEYGENAIEMATLTRKIRHLVAVRAVQPELPEQTPPSLLQ.

5-amino-6-(D-ribitylamino)uracil contacts are provided by residues F23, 61-63, and 85-87; these read SFE and AVI. Residue 90–91 participates in (2S)-2-hydroxy-3-oxobutyl phosphate binding; it reads QT. H93 functions as the Proton donor in the catalytic mechanism. F118 is a binding site for 5-amino-6-(D-ribitylamino)uracil. Residue R132 participates in (2S)-2-hydroxy-3-oxobutyl phosphate binding.

This sequence belongs to the DMRL synthase family.

It carries out the reaction (2S)-2-hydroxy-3-oxobutyl phosphate + 5-amino-6-(D-ribitylamino)uracil = 6,7-dimethyl-8-(1-D-ribityl)lumazine + phosphate + 2 H2O + H(+). The protein operates within cofactor biosynthesis; riboflavin biosynthesis; riboflavin from 2-hydroxy-3-oxobutyl phosphate and 5-amino-6-(D-ribitylamino)uracil: step 1/2. In terms of biological role, catalyzes the formation of 6,7-dimethyl-8-ribityllumazine by condensation of 5-amino-6-(D-ribitylamino)uracil with 3,4-dihydroxy-2-butanone 4-phosphate. This is the penultimate step in the biosynthesis of riboflavin. The protein is 6,7-dimethyl-8-ribityllumazine synthase of Gloeobacter violaceus (strain ATCC 29082 / PCC 7421).